Consider the following 172-residue polypeptide: Large ribosomal subunit protein uL10 (172 aa).

Belongs to the universal ribosomal protein uL10 family. In terms of assembly, part of the ribosomal stalk of the 50S ribosomal subunit. The N-terminus interacts with L11 and the large rRNA to form the base of the stalk. The C-terminus forms an elongated spine to which L12 dimers bind in a sequential fashion forming a multimeric L10(L12)X complex.

Functionally, forms part of the ribosomal stalk, playing a central role in the interaction of the ribosome with GTP-bound translation factors. The protein is Large ribosomal subunit protein uL10 of Chlamydia trachomatis serovar L2 (strain ATCC VR-902B / DSM 19102 / 434/Bu).